Consider the following 115-residue polypeptide: U3-lycotoxin-Ls1n (115 aa).

Residues 1 to 20 (MKFVLLFGVLLVTLFSYSSA) form the signal peptide. The propeptide occupies 21–44 (EMLDDFDQADEDELLSLIEKEEAR). 4 disulfide bridges follow: cysteine 48–cysteine 63, cysteine 55–cysteine 72, cysteine 62–cysteine 87, and cysteine 74–cysteine 85.

This sequence belongs to the neurotoxin 19 (CSTX) family. 01 subfamily. In terms of tissue distribution, expressed by the venom gland.

The protein localises to the secreted. In Lycosa singoriensis (Wolf spider), this protein is U3-lycotoxin-Ls1n.